Reading from the N-terminus, the 298-residue chain is Putative insertion sequence ATP-binding protein y4iQ/y4nD/y4sD (298 aa).

114 to 121 (GPPGGGKS) contributes to the ATP binding site. The segment at 276–298 (RQSEHDETLASDNQHDTFMPTAT) is disordered.

Belongs to the IS21/IS1162 putative ATP-binding protein family.

The protein is Putative insertion sequence ATP-binding protein y4iQ/y4nD/y4sD of Sinorhizobium fredii (strain NBRC 101917 / NGR234).